Here is a 107-residue protein sequence, read N- to C-terminus: UPF0060 membrane protein Sala_0701 (107 aa).

The next 4 membrane-spanning stretches (helical) occupy residues 4 to 24, 30 to 50, 60 to 80, and 87 to 107; these read FAYI…WAWL, VWWV…LTLV, AAYG…VEGA, and LIGA…PRGG.

The protein belongs to the UPF0060 family.

Its subcellular location is the cell inner membrane. This is UPF0060 membrane protein Sala_0701 from Sphingopyxis alaskensis (strain DSM 13593 / LMG 18877 / RB2256) (Sphingomonas alaskensis).